Here is a 514-residue protein sequence, read N- to C-terminus: Serine--tRNA ligase, cytoplasmic (514 aa).

At methionine 1 the chain carries N-acetylmethionine. Residues 9 to 61 (RVDKGGDPALIRETQEKRFKDPGLVDQLVKADSEWRRCRFRADNLNKLKNLCS) form an interaction with tRNA region. Serine 241 is modified (phosphoserine). 2 residues coordinate L-serine: threonine 271 and arginine 302. Residues 302 to 304 (RQE) and 318 to 321 (VHQF) each bind ATP. Lysine 323 carries the post-translational modification N6-acetyllysine. Glutamate 325 is an L-serine binding site. ATP is bound at residue 391-394 (ELVS). Asparagine 427 provides a ligand contact to L-serine. Residues 472-514 (KPAPIDQEPSKKQKKQHEGSKKKAAARDVTLENRLQNMEVTDA) are disordered. The segment covering 479–502 (EPSKKQKKQHEGSKKKAAARDVTL) has biased composition (basic and acidic residues). The short motif at 482–494 (KKQKKQHEGSKKK) is the Nuclear localization signal element. Positions 504 to 514 (NRLQNMEVTDA) are enriched in polar residues.

This sequence belongs to the class-II aminoacyl-tRNA synthetase family. Type-1 seryl-tRNA synthetase subfamily. In terms of assembly, homodimer. The tRNA molecule may bind across the dimer. Interacts with SIRT2. Interacts with METTL6; interaction is required for the tRNA N(3)-methylcytidine methyltransferase activity of METTL6.

The protein resides in the cytoplasm. Its subcellular location is the nucleus. It catalyses the reaction tRNA(Ser) + L-serine + ATP = L-seryl-tRNA(Ser) + AMP + diphosphate + H(+). It carries out the reaction tRNA(Sec) + L-serine + ATP = L-seryl-tRNA(Sec) + AMP + diphosphate + H(+). The protein operates within aminoacyl-tRNA biosynthesis; selenocysteinyl-tRNA(Sec) biosynthesis; L-seryl-tRNA(Sec) from L-serine and tRNA(Sec): step 1/1. Functionally, catalyzes the attachment of serine to tRNA(Ser) in a two-step reaction: serine is first activated by ATP to form Ser-AMP and then transferred to the acceptor end of tRNA(Ser). Is probably also able to aminoacylate tRNA(Sec) with serine, to form the misacylated tRNA L-seryl-tRNA(Sec), which will be further converted into selenocysteinyl-tRNA(Sec). In the nucleus, binds to the VEGFA core promoter and prevents MYC binding and transcriptional activation by MYC. Recruits SIRT2 to the VEGFA promoter, promoting deacetylation of histone H4 at 'Lys-16' (H4K16). Thereby, inhibits the production of VEGFA and sprouting angiogenesis mediated by VEGFA. This chain is Serine--tRNA ligase, cytoplasmic (SARS1), found in Oryctolagus cuniculus (Rabbit).